The chain runs to 134 residues: Profilin-4 (134 aa).

It belongs to the profilin family. In terms of assembly, occurs in many kinds of cells as a complex with monomeric actin in a 1:1 ratio. In terms of tissue distribution, specifically expressed in mature and germinating pollen grains, and growing pollen tubes (at protein level).

The protein resides in the cytoplasm. The protein localises to the cytoskeleton. Functionally, binds to actin monomers and regulates the organization of the actin cytoskeleton. At high concentrations, profilin prevents the polymerization of actin, whereas it enhances it at low concentrations. At low concentrations, associates with the poly-proline motif of formins to enhance actin filament elongation rate. Acts redundantly with PRF5 to regulate apical actin polymerization at the tip of pollen tube and control polarized pollen tube growth. Functions probably by favoring formin-mediated actin polymerization at pollen tube tips. The protein is Profilin-4 of Arabidopsis thaliana (Mouse-ear cress).